A 702-amino-acid polypeptide reads, in one-letter code: Ribosomal RNA large subunit methyltransferase K/L (702 aa).

The 112-residue stretch at 43 to 154 folds into the THUMP domain; sequence LIYQSLMWSR…KETAHISLDL (112 aa).

It belongs to the methyltransferase superfamily. RlmKL family.

It localises to the cytoplasm. It catalyses the reaction guanosine(2445) in 23S rRNA + S-adenosyl-L-methionine = N(2)-methylguanosine(2445) in 23S rRNA + S-adenosyl-L-homocysteine + H(+). It carries out the reaction guanosine(2069) in 23S rRNA + S-adenosyl-L-methionine = N(2)-methylguanosine(2069) in 23S rRNA + S-adenosyl-L-homocysteine + H(+). In terms of biological role, specifically methylates the guanine in position 2445 (m2G2445) and the guanine in position 2069 (m7G2069) of 23S rRNA. This Enterobacter sp. (strain 638) protein is Ribosomal RNA large subunit methyltransferase K/L.